A 148-amino-acid polypeptide reads, in one-letter code: 3-dehydroquinate dehydratase (148 aa).

The active-site Proton acceptor is tyrosine 23. 3 residues coordinate substrate: asparagine 75, histidine 81, and aspartate 88. Histidine 101 acts as the Proton donor in catalysis. Residues 102–103 (IS) and arginine 112 each bind substrate.

This sequence belongs to the type-II 3-dehydroquinase family. In terms of assembly, homododecamer.

It carries out the reaction 3-dehydroquinate = 3-dehydroshikimate + H2O. It participates in metabolic intermediate biosynthesis; chorismate biosynthesis; chorismate from D-erythrose 4-phosphate and phosphoenolpyruvate: step 3/7. Catalyzes a trans-dehydration via an enolate intermediate. This Methylococcus capsulatus (strain ATCC 33009 / NCIMB 11132 / Bath) protein is 3-dehydroquinate dehydratase.